The sequence spans 162 residues: MPTQPQEKRSFLQFLKSFVGIVRVLQILLGAGLWVTIAANKYEGSIHFVLFVAVLFWLLTLAIFILTLLDKQDLVPIVGGERWLLSNLIHDVVATLLYLSTIGIMIYKTQKNSYCNLDVYKHHCLYKVYLTASVFACLTAAVYLLSGIYCSCRKCRGERTVV.

At 1–17 (MPTQPQEKRSFLQFLKS) the chain is on the cytoplasmic side. In terms of domain architecture, MARVEL spans 14 to 155 (FLKSFVGIVR…SGIYCSCRKC (142 aa)). The helical transmembrane segment at 18–38 (FVGIVRVLQILLGAGLWVTIA) threads the bilayer. Residues 39–47 (ANKYEGSIH) lie on the Extracellular side of the membrane. A helical membrane pass occupies residues 48–68 (FVLFVAVLFWLLTLAIFILTL). Topologically, residues 69-86 (LDKQDLVPIVGGERWLLS) are cytoplasmic. A helical membrane pass occupies residues 87–107 (NLIHDVVATLLYLSTIGIMIY). Residues 108 to 127 (KTQKNSYCNLDVYKHHCLYK) lie on the Extracellular side of the membrane. The chain crosses the membrane as a helical span at residues 128–148 (VYLTASVFACLTAAVYLLSGI). The Cytoplasmic segment spans residues 149–162 (YCSCRKCRGERTVV).

It is found in the membrane. Its subcellular location is the nucleus. This Danio rerio (Zebrafish) protein is MARVEL domain-containing protein 1 (marveld1).